We begin with the raw amino-acid sequence, 578 residues long: MRLWLRGLACQALRSSWGVCRIHTQPPPPPIPEVVATWEAISLGRQPVPEYFNFAHDVLDVWSQLEKTGHRPPNPAFWWVNGSGTEVKWTFEELGKQSRKAANVLEGVCGLQPGDRMMLVLPRLPDWWLISVACMRTGVVMIPGVSQLTAKDLKYRLQAARAKSIVTSDALAPQVDAISADCPSLQTKLLVSDTSRPGWINFRELLRAASPEHNCVRTRSGDSVAIYFTSGTTGAPKMVEHSQSSYGLGFVASGRRWMALTESDIFWNTTDTGWVKAAWTLFSAWSNGACIFVHELPRVDAKTILNTLCRFPITTLCCVPTLFRLLVQEDLTRYKFQCLRHCLTGGEALNPDVRDKWKSQTGLELHEGYGQSETVVICGNSRNSTIKSGSMGKASPPYDVQIVDEEGNVLPPGKEGNIAVRIKPTRPFCFFNCYLDNPEKTAASEQGDFYITGDRAHMDEDGYFWFLGRNDDVINSSSYRIGPVEVESALAEHPAVLESAVVSSPDPIRGEVVKAFIVLSPAYASHDPEALTRELQEHVKTVTAPYKYPRKVAFISELPKTVSGKILRSKLRNQEWGR.

The transit peptide at 1 to 22 directs the protein to the mitochondrion; it reads MRLWLRGLACQALRSSWGVCRI. Lys-96 is subject to N6-acetyllysine; alternate. Lys-96 carries the post-translational modification N6-succinyllysine; alternate. At Lys-151 the chain carries N6-acetyllysine. Residue 229-237 participates in ATP binding; it reads TSGTTGAPK. Lys-302 carries the post-translational modification N6-acetyllysine; alternate. The residue at position 302 (Lys-302) is an N6-succinyllysine; alternate. An N6-acetyllysine modification is found at Lys-335. ATP-binding positions include 367–372, Asp-454, Arg-469, and Lys-565; that span reads EGYGQS.

The protein belongs to the ATP-dependent AMP-binding enzyme family. The cofactor is Mg(2+). Mn(2+) is required as a cofactor.

It localises to the mitochondrion matrix. It catalyses the reaction a medium-chain fatty acid + ATP + CoA = a medium-chain fatty acyl-CoA + AMP + diphosphate. Catalyzes the activation of fatty acids by CoA to produce an acyl-CoA, the first step in fatty acid metabolism. In Mus musculus (Mouse), this protein is Acyl-coenzyme A synthetase ACSM5, mitochondrial (Acsm5).